The sequence spans 172 residues: Myosin regulatory light chain 2, smooth muscle minor isoform (172 aa).

Residue Ser-2 is modified to N-acetylserine. Thr-19 is subject to Phosphothreonine; by MLCK. Ser-20 carries the post-translational modification Phosphoserine; by MLCK. EF-hand domains are found at residues Ser-29–Asn-64, Asp-98–Arg-133, and Phe-134–Asp-169. 4 residues coordinate Ca(2+): Asp-42, Asn-44, Asp-46, and Asp-53.

As to quaternary structure, myosin is a hexamer of 2 heavy chains and 4 light chains. Phosphorylation increases the actin-activated myosin ATPase activity and thereby regulates the contractile activity.

Its function is as follows. Myosin regulatory subunit that plays an important role in regulation of both smooth muscle and nonmuscle cell contractile activity. Implicated in cytokinesis, receptor capping, and cell locomotion. The chain is Myosin regulatory light chain 2, smooth muscle minor isoform from Gallus gallus (Chicken).